Reading from the N-terminus, the 145-residue chain is Large ribosomal subunit protein uL16 (145 aa).

It belongs to the universal ribosomal protein uL16 family. In terms of assembly, part of the 50S ribosomal subunit.

Functionally, binds 23S rRNA and is also seen to make contacts with the A and possibly P site tRNAs. This chain is Large ribosomal subunit protein uL16, found in Lactobacillus gasseri (strain ATCC 33323 / DSM 20243 / BCRC 14619 / CIP 102991 / JCM 1131 / KCTC 3163 / NCIMB 11718 / NCTC 13722 / AM63).